A 365-amino-acid polypeptide reads, in one-letter code: Phospho-N-acetylmuramoyl-pentapeptide-transferase (365 aa).

10 consecutive transmembrane segments (helical) span residues 22-42, 74-94, 95-115, 134-154, 168-188, 201-221, 240-260, 267-287, 292-312, and 342-362; these read YISVRIIMISITSLLITLALG, TMGGVLILSSVIISCLLWGDL, TSIYLWILILVVIFFGAIGFF, KFALQSIFSIVLAIVLFYLLS, SLYIPMGIVIFVVLAFFIING, GLAIVPVVLVAAGLGIYAYIE, LAEVAVFCAAVCGSGLAFLWF, VFMGDVGSLTLGAVLGVIAVM, LIFFIMGLLFVVEALSVMLQV, and KVVIRFWIISLILFLIGLAAI.

This sequence belongs to the glycosyltransferase 4 family. MraY subfamily. The cofactor is Mg(2+).

Its subcellular location is the cell inner membrane. The enzyme catalyses UDP-N-acetyl-alpha-D-muramoyl-L-alanyl-gamma-D-glutamyl-meso-2,6-diaminopimeloyl-D-alanyl-D-alanine + di-trans,octa-cis-undecaprenyl phosphate = di-trans,octa-cis-undecaprenyl diphospho-N-acetyl-alpha-D-muramoyl-L-alanyl-D-glutamyl-meso-2,6-diaminopimeloyl-D-alanyl-D-alanine + UMP. Its pathway is cell wall biogenesis; peptidoglycan biosynthesis. Functionally, catalyzes the initial step of the lipid cycle reactions in the biosynthesis of the cell wall peptidoglycan: transfers peptidoglycan precursor phospho-MurNAc-pentapeptide from UDP-MurNAc-pentapeptide onto the lipid carrier undecaprenyl phosphate, yielding undecaprenyl-pyrophosphoryl-MurNAc-pentapeptide, known as lipid I. The chain is Phospho-N-acetylmuramoyl-pentapeptide-transferase from Francisella tularensis subsp. mediasiatica (strain FSC147).